A 278-amino-acid chain; its full sequence is Putative carbamate hydrolase RutD (278 aa).

This sequence belongs to the AB hydrolase superfamily. Hydrolase RutD family.

It carries out the reaction carbamate + 2 H(+) = NH4(+) + CO2. In terms of biological role, involved in pyrimidine catabolism. May facilitate the hydrolysis of carbamate, a reaction that can also occur spontaneously. The protein is Putative carbamate hydrolase RutD of Yersinia enterocolitica serotype O:8 / biotype 1B (strain NCTC 13174 / 8081).